Reading from the N-terminus, the 335-residue chain is Dehydration-responsive element-binding protein 2A (335 aa).

2 disordered regions span residues 1–32 (MAVY…GTTV) and 50–74 (STKK…GPEN). Positions 19–55 (RKRKSRSRGDGTTVAERLKRWKEYNETVEEVSTKKRK) match the Nuclear localization signal motif. Residues 52 to 66 (KKRKVPAKGSKKGCM) show a composition bias toward basic residues. The segment at residues 78–135 (SFRGVRQRIWGKWVAEIREPNRGSRLWLGTFPTAQEAASAYDEAAKAMYGPLARLNFP) is a DNA-binding region (AP2/ERF). A disordered region spans residues 279-304 (QDRYPGNSVANGSYRPESQQSGFDPL). The span at 286–304 (SVANGSYRPESQQSGFDPL) shows a compositional bias: polar residues.

This sequence belongs to the AP2/ERF transcription factor family. ERF subfamily. As to quaternary structure, interacts with MED25. Binds to DPB3-1 in the nucleus during heat-stress. Ubiquitinated by DRIP1 and DRIP2. Ubiquitination probably leads to its subsequent degradation, thus negatively regulating response to drought. Expressed preferentially in roots and stems, and at a lower level in leaves.

The protein resides in the nucleus. Functionally, transcriptional activator that binds specifically to the DNA sequence 5'-[AG]CCGAC-3'. Binding to the C-repeat/DRE element mediates high salinity- and dehydration-inducible transcription. Promotes the expression of heat stress-inducible genes by contributing to the formation of a heat stress-specific transcriptional complex with NF-Y subunits (e.g. DPB3-1, NF-YA2 and NF-YB3) at the promoter of target genes, thus promoting heat tolerance. The polypeptide is Dehydration-responsive element-binding protein 2A (Arabidopsis thaliana (Mouse-ear cress)).